Here is a 117-residue protein sequence, read N- to C-terminus: Large ribosomal subunit protein uL18 (117 aa).

It belongs to the universal ribosomal protein uL18 family. Part of the 50S ribosomal subunit; part of the 5S rRNA/L5/L18/L25 subcomplex. Contacts the 5S and 23S rRNAs.

Its function is as follows. This is one of the proteins that bind and probably mediate the attachment of the 5S RNA into the large ribosomal subunit, where it forms part of the central protuberance. The protein is Large ribosomal subunit protein uL18 of Actinobacillus succinogenes (strain ATCC 55618 / DSM 22257 / CCUG 43843 / 130Z).